The primary structure comprises 61 residues: Probable tautomerase lmo2564 (61 aa).

The active-site Proton acceptor; via imino nitrogen is proline 2.

Belongs to the 4-oxalocrotonate tautomerase family.

The protein is Probable tautomerase lmo2564 of Listeria monocytogenes serovar 1/2a (strain ATCC BAA-679 / EGD-e).